A 211-amino-acid chain; its full sequence is Putative truncated flagellar export/assembly protein LafU (211 aa).

An OmpA-like domain is found at 58–176 (LRVLIKDDQN…RIEIMVLTKS (119 aa)).

It belongs to the MotB family.

The polypeptide is Putative truncated flagellar export/assembly protein LafU (Escherichia coli (strain K12)).